We begin with the raw amino-acid sequence, 715 residues long: Polyribonucleotide nucleotidyltransferase (715 aa).

Asp488 and Asp494 together coordinate Mg(2+). One can recognise a KH domain in the interval 555 to 614; sequence PRIEVMHIPTDKIRDVIGSGGKVIREIVEKTGAKINIEDDGTVKIASSNAKEIEAAKKWI. Positions 624-692 constitute an S1 motif domain; sequence GEIYEGTVVK…ERGKVRLSMK (69 aa).

Belongs to the polyribonucleotide nucleotidyltransferase family. The cofactor is Mg(2+).

Its subcellular location is the cytoplasm. It carries out the reaction RNA(n+1) + phosphate = RNA(n) + a ribonucleoside 5'-diphosphate. Involved in mRNA degradation. Catalyzes the phosphorolysis of single-stranded polyribonucleotides processively in the 3'- to 5'-direction. The polypeptide is Polyribonucleotide nucleotidyltransferase (Mesorhizobium japonicum (strain LMG 29417 / CECT 9101 / MAFF 303099) (Mesorhizobium loti (strain MAFF 303099))).